The chain runs to 376 residues: UDP-N-acetylglucosamine--N-acetylmuramyl-(pentapeptide) pyrophosphoryl-undecaprenol N-acetylglucosamine transferase (376 aa).

UDP-N-acetyl-alpha-D-glucosamine contacts are provided by residues 14 to 16 (TGG), asparagine 128, arginine 169, serine 201, isoleucine 256, and glutamine 301.

This sequence belongs to the glycosyltransferase 28 family. MurG subfamily.

It is found in the cell inner membrane. The catalysed reaction is di-trans,octa-cis-undecaprenyl diphospho-N-acetyl-alpha-D-muramoyl-L-alanyl-D-glutamyl-meso-2,6-diaminopimeloyl-D-alanyl-D-alanine + UDP-N-acetyl-alpha-D-glucosamine = di-trans,octa-cis-undecaprenyl diphospho-[N-acetyl-alpha-D-glucosaminyl-(1-&gt;4)]-N-acetyl-alpha-D-muramoyl-L-alanyl-D-glutamyl-meso-2,6-diaminopimeloyl-D-alanyl-D-alanine + UDP + H(+). It functions in the pathway cell wall biogenesis; peptidoglycan biosynthesis. Cell wall formation. Catalyzes the transfer of a GlcNAc subunit on undecaprenyl-pyrophosphoryl-MurNAc-pentapeptide (lipid intermediate I) to form undecaprenyl-pyrophosphoryl-MurNAc-(pentapeptide)GlcNAc (lipid intermediate II). The polypeptide is UDP-N-acetylglucosamine--N-acetylmuramyl-(pentapeptide) pyrophosphoryl-undecaprenol N-acetylglucosamine transferase (Phocaeicola vulgatus (strain ATCC 8482 / DSM 1447 / JCM 5826 / CCUG 4940 / NBRC 14291 / NCTC 11154) (Bacteroides vulgatus)).